A 461-amino-acid polypeptide reads, in one-letter code: MSRQVVRSSKFRHVFGQPAKADQCYEDVRVSQNTWDSGFCAVNPKFVALICEASGGGAFLVLPLGKTGRVDKNVPMVCGHTAPVLDIAWCPHNDNVIASGSEDCSVMVWEIPDGGLTLPLREPVVTLEGHTKRVGIVAWHPTAQNVLLSAGCDNVILVWDVGTGVAVLTLGSDVHPDTIYSVDWSRDGALICTSCRDKRVRIIEPRKGTIVAEKDRPHEGTRPVRAVFVSDGKILTTGFSRMSERQVALWDTKHLEEPLSLQELDTSSGVLLPFFDPDTNIVYLCGKGDSSIRYFEITSEAPFLHYLSMFSSKESQRGMGYMPKRGLEVNKCEIARFYKLHERKCEPIAMTVPRKSDLFQEDLYPPTAGPDAALTAEEWLGGRDAGPLLISLKDGYVPPKSRELRVNRGLDTGRKRTTPEASGAPSSDAISRLEEEMRKLQATVQELQKRLDRLEETVQAK.

S2 carries the N-acetylserine modification. At S2 the chain carries Phosphoserine; by PKC. 7 WD repeats span residues 13 to 63 (HVFG…LVLP), 73 to 110 (NVPM…MVWE), 123 to 160 (PVVT…LVWD), 164 to 204 (GVAV…RIIE), 207 to 251 (KGTI…ALWD), 258 to 296 (PLSL…RYFE), and 302 to 349 (PFLH…EPIA). The segment covering 404–418 (LRVNRGLDTGRKRTT) has biased composition (basic and acidic residues). The segment at 404–429 (LRVNRGLDTGRKRTTPEASGAPSSDA) is disordered. Residue T412 is modified to Phosphothreonine; by PKC. T418 carries the phosphothreonine modification. The residue at position 422 (S422) is a Phosphoserine. Positions 424 to 460 (APSSDAISRLEEEMRKLQATVQELQKRLDRLEETVQA) form a coiled coil. K449 is modified (N6-acetyllysine).

Belongs to the WD repeat coronin family. In terms of assembly, binds actin. Phosphorylation at Thr-412 by PKC strongly down-regulates the association with actin. In terms of processing, polyubiquitinated by RNF128 with 'Lys-48'-linked chains, leading to proteasomal degradation. Expressed in brain, thymus, spleen, bone marrow and lymph node. Low in lung and gut.

It localises to the cytoplasm. Its subcellular location is the cytoskeleton. It is found in the cell cortex. The protein resides in the cytoplasmic vesicle. The protein localises to the phagosome membrane. Its function is as follows. May be a crucial component of the cytoskeleton of highly motile cells, functioning both in the invagination of large pieces of plasma membrane, as well as in forming protrusions of the plasma membrane involved in cell locomotion. In mycobacteria-infected macrophages, its retention on the phagosomal membrane prevents fusion between phagosomes and lysosomes. This Bos taurus (Bovine) protein is Coronin-1A (CORO1A).